Here is a 204-residue protein sequence, read N- to C-terminus: ADP-ribosylation factor-like protein 15 (204 aa).

Residues Gly-39–Thr-46, Glu-82–Ala-86, and Asn-142–Asp-145 contribute to the GTP site.

The protein belongs to the small GTPase superfamily. Arf family.

The polypeptide is ADP-ribosylation factor-like protein 15 (ARL15) (Pongo abelii (Sumatran orangutan)).